The primary structure comprises 261 residues: Small ribosomal subunit protein uS2 (261 aa).

At S2 the chain carries N-acetylserine. Residues 212–261 (QNAAEEAKAEETEEAPAAEAETEWTGETDDVDWADSGATPAAEDAAASNW) form a disordered region. The segment covering 222 to 244 (ETEEAPAAEAETEWTGETDDVDW) has biased composition (acidic residues).

The protein belongs to the universal ribosomal protein uS2 family. As to quaternary structure, component of the small ribosomal subunit. Mature ribosomes consist of a small (40S) and a large (60S) subunit. The 40S subunit contains about 33 different proteins and 1 molecule of RNA (18S). The 60S subunit contains about 49 different proteins and 3 molecules of RNA (25S, 5.8S and 5S). Interacts with RPS21.

The protein resides in the cytoplasm. Its function is as follows. Required for the assembly and/or stability of the 40S ribosomal subunit. Required for the processing of the 20S rRNA-precursor to mature 18S rRNA in a late step of the maturation of 40S ribosomal subunits. The chain is Small ribosomal subunit protein uS2 from Candida tropicalis (Yeast).